A 105-amino-acid chain; its full sequence is Urease subunit gamma (105 aa).

The protein belongs to the urease gamma subunit family. Heterotrimer of UreA (gamma), UreB (beta) and UreC (alpha) subunits. Three heterotrimers associate to form the active enzyme.

It is found in the cytoplasm. It catalyses the reaction urea + 2 H2O + H(+) = hydrogencarbonate + 2 NH4(+). It functions in the pathway nitrogen metabolism; urea degradation; CO(2) and NH(3) from urea (urease route): step 1/1. In Bacillus subtilis (strain 168), this protein is Urease subunit gamma.